A 155-amino-acid chain; its full sequence is Ribonuclease H (155 aa).

The RNase H type-1 domain maps to 1-142 (MLKQVEIFTD…CDELARAAAM (142 aa)). 4 residues coordinate Mg(2+): Asp-10, Glu-48, Asp-70, and Asp-134.

Belongs to the RNase H family. In terms of assembly, monomer. It depends on Mg(2+) as a cofactor.

Its subcellular location is the cytoplasm. It carries out the reaction Endonucleolytic cleavage to 5'-phosphomonoester.. Functionally, endonuclease that specifically degrades the RNA of RNA-DNA hybrids. This chain is Ribonuclease H, found in Salmonella paratyphi C (strain RKS4594).